Consider the following 267-residue polypeptide: 3-methyl-2-oxobutanoate hydroxymethyltransferase (267 aa).

Positions 46 and 85 each coordinate Mg(2+). 3-methyl-2-oxobutanoate contacts are provided by residues 46-47 (DS), aspartate 85, and lysine 115. Glutamate 117 contributes to the Mg(2+) binding site. The active-site Proton acceptor is the glutamate 184.

Belongs to the PanB family. Homodecamer; pentamer of dimers. Mg(2+) is required as a cofactor.

Its subcellular location is the cytoplasm. It catalyses the reaction 3-methyl-2-oxobutanoate + (6R)-5,10-methylene-5,6,7,8-tetrahydrofolate + H2O = 2-dehydropantoate + (6S)-5,6,7,8-tetrahydrofolate. Its pathway is cofactor biosynthesis; (R)-pantothenate biosynthesis; (R)-pantoate from 3-methyl-2-oxobutanoate: step 1/2. Catalyzes the reversible reaction in which hydroxymethyl group from 5,10-methylenetetrahydrofolate is transferred onto alpha-ketoisovalerate to form ketopantoate. The protein is 3-methyl-2-oxobutanoate hydroxymethyltransferase of Citrifermentans bemidjiense (strain ATCC BAA-1014 / DSM 16622 / JCM 12645 / Bem) (Geobacter bemidjiensis).